The primary structure comprises 339 residues: Coproporphyrin III ferrochelatase (339 aa).

Positions 52 and 121 each coordinate Fe-coproporphyrin III. 2 residues coordinate Fe(2+): His-181 and Glu-264.

Belongs to the ferrochelatase family.

Its subcellular location is the cytoplasm. The enzyme catalyses Fe-coproporphyrin III + 2 H(+) = coproporphyrin III + Fe(2+). The protein operates within porphyrin-containing compound metabolism; protoheme biosynthesis. Involved in coproporphyrin-dependent heme b biosynthesis. Catalyzes the insertion of ferrous iron into coproporphyrin III to form Fe-coproporphyrin III. The chain is Coproporphyrin III ferrochelatase from Mycolicibacterium vanbaalenii (strain DSM 7251 / JCM 13017 / BCRC 16820 / KCTC 9966 / NRRL B-24157 / PYR-1) (Mycobacterium vanbaalenii).